Consider the following 104-residue polypeptide: Protein MHF2 homolog (104 aa).

This sequence belongs to the CENP-X/MHF2 family.

Its subcellular location is the nucleus. Acts in the same pathway as FANCM to restrain class II meiotic crossing over (CO), and acts with FANCM during meiosis to repair interstrand cross-links (ICLs). The protein is Protein MHF2 homolog of Arabidopsis thaliana (Mouse-ear cress).